A 3094-amino-acid chain; its full sequence is MAFLNVSAVPSCAFAPAFAPHAGASPIVPDSFPCVPRYSDDISHFRLTLSLDFSVPRPLSLNARVHLSASTDNPLPSLPLGFHAETFVLELNGSSAPFSIPSRHIDFVVNRPFSVFPTEVLSVSSLRTPSRLFALLCDFFLYCSKPGPCVEIASFSTPPPCLVSNCVAQIPTHAEMESIRFPTKTLPAGRFLQFHKRKYTKRPETLIIHESGLALKTSALGVTSKPNSRPITVKSASGEKYEAYEISRKDFERSRRRQQTPRVRSHKPRKINKAVEPFFFPEEPKKDKRKRASLPTEDEGFITFGTLRFPLSETPKEEPRLPKFREVEIPVVKKHAVPAVVSKPVRTFRPVATTGAEYVNARNQCSRRPRNHPILRSASYTFGFKKMPLQRFMKEKKEYYVKRSKVVSSCSVTKSPLEALASILKNLPQYSYNSERLKFYDHFIGDDFEIEVHPLRGGKLSVLLILPKGEAYCVVTAATPQYHAALTIARGDRPRVGELLQYRPGEGLCYLAHAALCCALQKRTFREEDFFVGMYPTKFVFAKRLTEKLGPSALKHPVRGRQVSRSLFHCDVASAFSSPFYSLPRFIGGVEEEAPEITSSLKHKAIESVYERVSIHKDNLLARSVEKDLIDFKDEIKSLSKEKRSVTVPFYMGEAVQSGLTRAYPQFNLSFTHSVYSDHPAAAGSRLLENETLASMAKSSFSDIGGCPLFHIKRGSTDYHVCRPIYDMKDAQRRVSRELQARGLVENLSREQLVEAQARVSVCPHTLGNCNVKSDVLIMVQVYDASLNEIASAMVLKESKVAYLTMVTPGELLDEREAFAIDALGCDVVVDTRRDMVQYKFGSSCYCHKLSNIKSIMLTPAFTFSGNLFSVEMYENRMGVNYYKITRSAYSPEIRGVKTLRYRRACTEVVQVKLPRFDKTLKTFLSGYDYIYLDAKFVSRVFDYVVSNCSVVNSKTFEWVWSYIKSSKSRVVISGKVIHRDVHIDLKHSECFAAVMLAVGVRSRTTTEFLAKNLNYYTGDASCFETIRFLFREWSRRAYAEINRSFRKLMKSILSAGLDYEFLDLDNSLQHLLEYSEVEVRVSIAQNGEVDCNEENRVLTEIIAEAADRKSIAQGLSGALSSVPTQPRGGLRGGSRRSGVSFLYNLVEEVGNLFFSVGDAVRFLVKVFKTFSDSPIFRVVRMFLDLAEAASPFVSVVSLCAWLREAVSAFSSWVADRTVSESVKTFVNRTVKRFLNFMSAKTLTKKFFRFFLSASALAKTVVRKAKVILEAYWEVWFESILSDSGEYSAVEFCSSVVITLLTNSGRLLPGFSPSAIITEVLLDLATKISIEVLLKQISPADSTASSALYRRVLSEILSNFRTMGEHGIFTKVFLLCGFLPVFVRKCVALCVPGDMATYARFLEYGVDDLFFLGRSVNSIKNYLCVVAAGLVDSIVDSVVLKLSGVAKERVLGFKSKIIKNFLNVFRKAKVVTRTSSSTDLSEDEYFSCDESKPGLRGGSSRFTLSRLLDIFFNFLKSSKLVIENACFSAYERIERNMKLYFFPLNSSEEEARRLIRCAGDFDYLSDSAFDEDEMLRQAFEQYYSSDDESVTYDGKPTVLRSYLNVSRRFLETFCNGPKFFVKVSNYFKALYSRLLRVLPWVDRNLSDSPGLKGGNEKALLAKFFKTCVITACECVSQICCLRLIRLCWGTPACGLVRLFYITYSSTRVLSRVVVAVAVCPLLVRNELDGLSDGLTNMGVSVFRRLFVALRRALSAYSNSALRRKIIEFIFGNIHHPFDVAVIETNEVAPEPLSPEVDIDVDCDFGSDSESVSSDEVASNPRPGLHGGSRRSSNFLTSLVKVVFKLARRIPRLLFRLRNFVAYFVERRLASKRLKTFIGLARLFDNFSLTSVVYLLQEYDSVLNAFIDVELILLNSGSVNVLPLVSWVRGSLTKLAEAIVGSGFASFLGRMCCRVSDWCSSSSNAGCNFMSPVRTKGKFVPPSSSGSTASMYERLEALESDIREHVLSTCRVGSDEEEERPKEVTEPGIEHTSEDVVPIRSHSQPLSGGECSYSEDREENERANLLPHVSKIVSERRGLETARRNKRTLHGVSEFLNAINTSNEQPRPIIVDHSPESRALTNSVREFYYLQELALFELSCKLREYYDQLKVANFNRQECLCDKDEDMFVLRAGQGVVSGRNSRLPLKHFKGHEFCFRSGGLVPYDGTSRVDTIFHTQTNFVSANALLSGYLSYRTFTFTNLSANVLLYEAPPGGGKTTTLIKVFCETFSKVNSLILTANKSSREEILAKVNRIVLDEGDTPLQTRDRILTIDSYLMNNRGLTCKVLYLDECFMVHAGAAVACIEFTKCDSAILFGDSRQIRYGRCSELDTAVLSDLNRFVDDESRVYGEVSYRCPWDVCAWLSTFYPKTVATTNLVSAGQSSMQVREIESVDDVEYSSEFVYLTMLQSEKKDLLKSFGKRSRSSVEKPTVLTVHEAQGETYRKVNLVRTKFQEDDPFRSENHITVALSRHVESLTYSVLSSKRDDAIAQAIVKAKQLVDAYRVYPTSFGGSTLDVSVNPSTSDRSKCKASSAPYEVINSFLESVVPGTTSVDFGDVSEEMGTQVFESGADNVVIRDSAPVNKSTDHDPQRVSSIRSQAIPKRKPSLQENLYSYESRNYNFTVCERFSGPQEFGQAMAMVMLERSFDLEKVAKVRSDVIAITEKGVRTWMSKREPSQLRALSSDLQKPLNLEEEITTFKLMVKRDAKVKLDSSCLVKHPPAQNIMFHRKAVNAIFSPCFDEFKNRVITCTNSNIVFFTEMTNSTLASIAKEMLGSEHVYNVGEIDFSKFDKSQDAFIKSFERTLYSAFGFDEDLLDVWMQGEYTSNATTLDGQLSFSVDNQRKSGASNTWIGNSIETLGILSMFYYTNRFKALFVSGDDSLIFSESPIRNSADAMCTELGFETKFLTPSVPYFCSKFFVMTGHDVFFVPDPYKLLVKLGASKDEVDDEFLFEVFTSFRDLTKDLVDERVIELLTHLVHSKYGYESGDTYAALCAIHCIRSNFSSFKKLYPKVKGWVVHYGKLKFVLRKFANCFREKFDTAFGERTFLLTTKLETVL.

Catalysis depends on for leader protease activity residues cysteine 509 and histidine 569. The stretch at 622–647 (ARSVEKDLIDFKDEIKSLSKEKRSVT) forms a coiled coil. Residues 670-857 (SFTHSVYSDH…HKLSNIKSIM (188 aa)) enclose the Alphavirus-like MT domain. Positions 1807–1816 (DSESVSSDEV) are enriched in low complexity. The segment at 1807–1828 (DSESVSSDEVASNPRPGLHGGS) is disordered. Positions 2215 to 2387 (TQTNFVSANA…FVDDESRVYG (173 aa)) constitute a (+)RNA virus helicase ATP-binding domain. The (+)RNA virus helicase C-terminal domain maps to 2388–2548 (EVSYRCPWDV…AYRVYPTSFG (161 aa)). A RdRp catalytic domain is found at 2817-2930 (YNVGEIDFSK…FSESPIRNSA (114 aa)).

Post-translationally, the leader protease is released by autoproteolysis.

The protein localises to the host cytoplasmic vesicle membrane. The catalysed reaction is RNA(n) + a ribonucleoside 5'-triphosphate = RNA(n+1) + diphosphate. It carries out the reaction ATP + H2O = ADP + phosphate + H(+). In terms of biological role, L-pro is involved in systemic transport and in RNA amplification. Its function is as follows. RNA-dependent RNA polymerase replicates the viral genome. This chain is Replicase polyprotein 1ab, found in Beet yellows virus (isolate Ukraine) (BYV).